Reading from the N-terminus, the 325-residue chain is Probable ABC transporter permease YtrD (325 aa).

The next 8 helical transmembrane spans lie at 16–36 (VALV…ILNM), 63–83 (SSFI…QLGI), 113–133 (MVIV…IMLL), 146–166 (LGMI…GALT), 179–199 (VAIS…ILFG), 233–253 (YLVI…ISFV), 272–292 (PVQI…GFTA), and 298–318 (GYLI…YFAI).

This sequence belongs to the ABC-5 integral membrane protein family. The complex is composed of 2 ATP-binding proteins (YtrB and YtrE), 2 transmembrane proteins (YtrC and YtrD) and a solute-binding protein (YtrF).

The protein resides in the cell membrane. Its function is as follows. Part of the ABC transporter complex YtrBCDEF that plays a role in acetoin utilization during stationary phase and sporulation. This chain is Probable ABC transporter permease YtrD (ytrD), found in Bacillus subtilis (strain 168).